The chain runs to 732 residues: S-adenosyl-L-methionine-dependent tRNA 4-demethylwyosine synthase TYW1 (732 aa).

One can recognise a Flavodoxin-like domain in the interval 79–237 (VKIFYGSQTG…DFRAWKTKFI (159 aa)). Residues 85–89 (SQTGT) and 176–208 (VFGLGNSAYASHFNKVGKNVDKWLWMLGAHRVM) contribute to the FMN site. A disordered region spans residues 248-314 (RKKSCGGHCK…HQSLNSIVDV (67 aa)). A compositionally biased stretch (basic and acidic residues) spans 259–286 (GKCESHQHGSEEREEGSHEQDELHHRDT). A compositionally biased stretch (acidic residues) spans 287–301 (EEEEPFESSSEEEFG). A Radical SAM core domain is found at 400-644 (YGIESHRCME…VDLIPEYEIA (245 aa)). [4Fe-4S] cluster is bound by residues Cys416, Cys420, and Cys423.

The protein belongs to the TYW1 family. The cofactor is [4Fe-4S] cluster.

The enzyme catalyses N(1)-methylguanosine(37) in tRNA(Phe) + pyruvate + S-adenosyl-L-methionine = 4-demethylwyosine(37) in tRNA(Phe) + 5'-deoxyadenosine + L-methionine + CO2 + H2O. It functions in the pathway tRNA modification; wybutosine-tRNA(Phe) biosynthesis. Its function is as follows. Probable component of the wybutosine biosynthesis pathway. Wybutosine is a hyper modified guanosine with a tricyclic base found at the 3'-position adjacent to the anticodon of eukaryotic phenylalanine tRNA. Catalyzes the condensation of N-methylguanine with 2 carbon atoms from pyruvate to form the tricyclic 4-demethylwyosine, an intermediate in wybutosine biosynthesis. This chain is S-adenosyl-L-methionine-dependent tRNA 4-demethylwyosine synthase TYW1 (TYW1), found in Homo sapiens (Human).